The primary structure comprises 367 residues: Cyclin-D5-1 (367 aa).

The tract at residues 307-333 is disordered; sequence QPTSPASKSTTTTTGKRSSSSSCSEST.

Belongs to the cyclin family. Cyclin D subfamily.

In Oryza sativa subsp. japonica (Rice), this protein is Cyclin-D5-1 (CYCD5-1).